Consider the following 377-residue polypeptide: Chaperone protein DnaJ (377 aa).

The J domain maps to 5 to 70 (DFYEVLGVDR…EKRSAYDRMG (66 aa)). Residues 136 to 214 (GCKKEISFTA…CHGTGVKDKS (79 aa)) form a CR-type zinc finger. Residues Cys-149, Cys-152, Cys-166, Cys-169, Cys-188, Cys-191, Cys-202, and Cys-205 each contribute to the Zn(2+) site. CXXCXGXG motif repeat units lie at residues 149-156 (CETCDGKG), 166-173 (CSTCGGHG), 188-195 (CPNCGGSG), and 202-209 (CNDCHGTG). The tract at residues 353–377 (LDGDSKHHQSPKKKSFFEKLGDLFD) is disordered. The span at 367–377 (SFFEKLGDLFD) shows a compositional bias: basic and acidic residues.

This sequence belongs to the DnaJ family. As to quaternary structure, homodimer. The cofactor is Zn(2+).

It localises to the cytoplasm. Functionally, participates actively in the response to hyperosmotic and heat shock by preventing the aggregation of stress-denatured proteins and by disaggregating proteins, also in an autonomous, DnaK-independent fashion. Unfolded proteins bind initially to DnaJ; upon interaction with the DnaJ-bound protein, DnaK hydrolyzes its bound ATP, resulting in the formation of a stable complex. GrpE releases ADP from DnaK; ATP binding to DnaK triggers the release of the substrate protein, thus completing the reaction cycle. Several rounds of ATP-dependent interactions between DnaJ, DnaK and GrpE are required for fully efficient folding. Also involved, together with DnaK and GrpE, in the DNA replication of plasmids through activation of initiation proteins. The polypeptide is Chaperone protein DnaJ (Psychrobacter sp. (strain PRwf-1)).